The primary structure comprises 133 residues: ATP synthase epsilon chain, chloroplastic (133 aa).

Belongs to the ATPase epsilon chain family. F-type ATPases have 2 components, CF(1) - the catalytic core - and CF(0) - the membrane proton channel. CF(1) has five subunits: alpha(3), beta(3), gamma(1), delta(1), epsilon(1). CF(0) has three main subunits: a, b and c.

It localises to the plastid. It is found in the chloroplast thylakoid membrane. Functionally, produces ATP from ADP in the presence of a proton gradient across the membrane. In Solanum lycopersicum (Tomato), this protein is ATP synthase epsilon chain, chloroplastic.